The chain runs to 520 residues: Pleckstrin homology domain-containing family O member 1-A (520 aa).

Disordered stretches follow at residues 1–23 (MKKSHLVKRGLQDANQPSSQPDK), 208–296 (SLDK…GHLQ), 313–439 (IQEQ…KSTD), and 497–520 (QARQRREELSKTGMASQKLQQKSP). Positions 20-131 (QPDKVGWIRR…WINVLNTAIT (112 aa)) constitute a PH domain. Over residues 227–241 (PASNTEAQEKTSSLP) the composition is skewed to polar residues. 2 stretches are compositionally biased toward basic and acidic residues: residues 242 to 255 (RKSEISWSQEDHPR) and 333 to 347 (DSPRLRHLKGSDSPH). Residues 348–361 (SKGSSSPHSANSPS) are compositionally biased toward low complexity. Composition is skewed to basic and acidic residues over residues 363 to 385 (RAKDSPSSKSKESPHAKSKDSPR) and 396 to 418 (KSIDSPDSKESSSLHMKCIDLTH). Residues 420–439 (KGSQSPLSTGSNSPHMKSTD) are compositionally biased toward polar residues. Basic and acidic residues predominate over residues 497-506 (QARQRREELS). The segment covering 509–520 (GMASQKLQQKSP) has biased composition (polar residues).

C-terminal fragments could be released during apoptosis via caspase-3-dependent cleavage.

Its subcellular location is the membrane. The protein resides in the nucleus. It is found in the cytoplasm. Functionally, plays a role in the regulation of the actin cytoskeleton through its interactions with actin capping protein (CP). This chain is Pleckstrin homology domain-containing family O member 1-A (plekho1a), found in Danio rerio (Zebrafish).